A 137-amino-acid chain; its full sequence is Large ribosomal subunit protein uL16 (137 aa).

It belongs to the universal ribosomal protein uL16 family. In terms of assembly, part of the 50S ribosomal subunit.

In terms of biological role, binds 23S rRNA and is also seen to make contacts with the A and possibly P site tRNAs. The polypeptide is Large ribosomal subunit protein uL16 (Rhodopseudomonas palustris (strain BisA53)).